The chain runs to 641 residues: Epsin-2 (641 aa).

The a 1,2-diacyl-sn-glycero-3-phospho-(1D-myo-inositol-4,5-bisphosphate) site is built by Arg-8, Lys-11, Arg-25, Asn-30, Arg-63, and His-73. The 133-residue stretch at 12–144 (NIVNNYSEAE…KDEERLKAER (133 aa)) folds into the ENTH domain. Residues Arg-153 and Gln-156 each carry the phosphoserine modification. A compositionally biased stretch (polar residues) spans 163-181 (SNQITFGRGSSQPNLSTSH). Disordered regions lie at residues 163–214 (SNQI…GAPL) and 255–275 (RATS…TSGE). Arg-170 carries the post-translational modification Omega-N-methylarginine. Phosphoserine occurs at positions 173, 192, and 195. Positions 259–273 (PRVSSELEQARPQTS) are enriched in polar residues. 2 consecutive UIM domains span residues 275–294 (EEEL…AEQE) and 300–319 (GDDL…TVKI). The disordered stretch occupies residues 340–425 (ALPSSGPAAQ…QPASSAGKRA (86 aa)). 6 repeat units span residues 352 to 354 (EPW), 364 to 366 (NPW), 377 to 379 (DPW), 391 to 393 (DPW), 409 to 411 (DPW), and 427 to 429 (DAW). Residues 352–639 (EPWGPSASTN…AQATGTTNPF (288 aa)) are 6 X 3 AA repeats of [DE]-P-W. The segment covering 408-421 (SDPWAASQQPASSA) has biased composition (low complexity). The disordered stretch occupies residues 470 to 512 (TAESVTSLPSQNNGTTSPDPFESQPLTVASSKPSSARKTPESF). Residues 472-506 (ESVTSLPSQNNGTTSPDPFESQPLTVASSKPSSAR) show a composition bias toward polar residues. Ser-486 is modified (phosphoserine). Position 508 is a phosphothreonine (Thr-508). 2 tandem repeats follow at residues 537–539 (NPF) and 552–554 (NPF). The segment at 537–639 (NPFLAPGAPA…AQATGTTNPF (103 aa)) is 3 X 3 AA repeats of N-P-F. Ser-570 carries the phosphoserine modification. Copy 3 of the repeat occupies 637–639 (NPF).

Belongs to the epsin family. As to quaternary structure, binds EPS15. Interacts with ITSN1. Binds AP-2 and clathrin. Interacts with UBQLN2. Post-translationally, ubiquitinated. Highest expression is found in brain. Detected at lower levels in lung and liver.

The protein resides in the cytoplasm. The protein localises to the cytoplasmic vesicle. It localises to the clathrin-coated vesicle. Functionally, plays a role in the formation of clathrin-coated invaginations and endocytosis. This is Epsin-2 (EPN2) from Homo sapiens (Human).